Consider the following 55-residue polypeptide: Large ribosomal subunit protein bL33 (55 aa).

It belongs to the bacterial ribosomal protein bL33 family.

The chain is Large ribosomal subunit protein bL33 from Methylobacterium sp. (strain 4-46).